The chain runs to 513 residues: Ribonuclease Y (513 aa).

The helical transmembrane segment at threonine 4–phenylalanine 24 threads the bilayer. The interval lysine 78 to glutamate 106 is disordered. A KH domain is found at threonine 203 to valine 288. An HD domain is found at valine 329 to alanine 422.

The protein belongs to the RNase Y family.

It localises to the cell membrane. Functionally, endoribonuclease that initiates mRNA decay. The protein is Ribonuclease Y of Finegoldia magna (strain ATCC 29328 / DSM 20472 / WAL 2508) (Peptostreptococcus magnus).